Consider the following 459-residue polypeptide: Cysteine--tRNA ligase (459 aa).

Cysteine 28 contributes to the Zn(2+) binding site. The 'HIGH' region signature appears at 30–40 (VTVYDLCHIGH). Zn(2+)-binding residues include cysteine 209, histidine 234, and glutamate 238. A 'KMSKS' region motif is present at residues 266–270 (KMSKS). Lysine 269 contributes to the ATP binding site.

This sequence belongs to the class-I aminoacyl-tRNA synthetase family. In terms of assembly, monomer. Zn(2+) is required as a cofactor.

Its subcellular location is the cytoplasm. The catalysed reaction is tRNA(Cys) + L-cysteine + ATP = L-cysteinyl-tRNA(Cys) + AMP + diphosphate. This chain is Cysteine--tRNA ligase, found in Haemophilus influenzae (strain 86-028NP).